We begin with the raw amino-acid sequence, 456 residues long: Chaperone protein dnaJ GFA2, mitochondrial (456 aa).

The transit peptide at 1 to 89 directs the protein to the mitochondrion; the sequence is MVPSNGAKVL…RSFHGTGSSF (89 aa). The region spanning 94–159 is the J domain; it reads DYYSVLGVSK…EKRDLYDQVG (66 aa). The segment at 225–303 adopts a CR-type zinc-finger fold; sequence GCSKTVTFQT…CRGARVVRGQ (79 aa). Residues Cys-238, Cys-241, Cys-255, Cys-258, Cys-277, Cys-280, Cys-291, and Cys-294 each contribute to the Zn(2+) site. CXXCXGXG motif repeat units follow at residues 238-245, 255-262, 277-284, and 291-298; these read CNTCGGQG, CKACNGSG, CQKCGGAG, and CKSCRGAR.

This sequence belongs to the DnaJ family. In terms of tissue distribution, widely expressed.

It is found in the mitochondrion. Chaperone that may play a role in mitochondrial protein folding. Involved in female gametophyte development. Required for cell death of the synergid cells during fertilization process, and fusion of the polar nuclei during megagametogenesis. The protein is Chaperone protein dnaJ GFA2, mitochondrial of Arabidopsis thaliana (Mouse-ear cress).